Reading from the N-terminus, the 129-residue chain is Aspartate 1-decarboxylase (129 aa).

Residue serine 25 is the Schiff-base intermediate with substrate; via pyruvic acid of the active site. The residue at position 25 (serine 25) is a Pyruvic acid (Ser). Threonine 57 is a substrate binding site. Tyrosine 58 serves as the catalytic Proton donor. Residue 73-75 (GAA) coordinates substrate.

It belongs to the PanD family. Heterooctamer of four alpha and four beta subunits. It depends on pyruvate as a cofactor. In terms of processing, is synthesized initially as an inactive proenzyme, which is activated by self-cleavage at a specific serine bond to produce a beta-subunit with a hydroxyl group at its C-terminus and an alpha-subunit with a pyruvoyl group at its N-terminus.

Its subcellular location is the cytoplasm. The catalysed reaction is L-aspartate + H(+) = beta-alanine + CO2. The protein operates within cofactor biosynthesis; (R)-pantothenate biosynthesis; beta-alanine from L-aspartate: step 1/1. Its function is as follows. Catalyzes the pyruvoyl-dependent decarboxylation of aspartate to produce beta-alanine. The polypeptide is Aspartate 1-decarboxylase (Hydrogenovibrio crunogenus (strain DSM 25203 / XCL-2) (Thiomicrospira crunogena)).